The following is a 1044-amino-acid chain: Disease resistance protein PIK6-NP (1044 aa).

Positions 3–184 (LAVGASEATM…PQIVSIKEPV (182 aa)) are structured coiled coil (CC) domain. The 357-residue stretch at 187–543 (KTVMENLEKW…IAEGFATEKQ (357 aa)) folds into the NB-ARC domain. A disordered region spans residues 258-302 (QVSKQEEAGGSTESSSRDENTREPQGSSSTSSREENTAESGTKRM). 3 LRR repeats span residues 635-657 (LAQVRSLTVFGNLNHVPFHSFNY), 682-705 (MLVLKYLSIRRTEIAKIPSKIEKL), and 706-728 (EYLETLDIRETYVEELPKSVGQL). The segment at 737–771 (GNKNTRKGLRLPQEKRNKAMKNPSPQGKTKEPAEK) is disordered. 6 LRR repeats span residues 808–834 (LTGLRKLAIYKLKISEENDTFKELLSS), 840–862 (SCGLQTLAINDENSKFINSLYNM), 866–888 (PRYLVSLELSGKLKWLPEWITSI), 889–911 (TTLNKLTISITVLTTETLEILRN), 935–958 (KGILEDNKLATDGEIVIPAKEFKS), and 980–1004 (MPALEIIEMRFQEFEGLFGIEILEN).

This sequence belongs to the disease resistance NB-LRR family.

Its function is as follows. Probable disease resistance protein. Resistance proteins guard the plant against pathogens that contain an appropriate avirulence protein via an indirect interaction with this avirulence protein. That triggers a defense system including the hypersensitive response, which restricts the pathogen growth. At the opposite of cultivar Kusabue, the cultivar Nipponbare doesn't recognize the effector avirulence protein AVR-Pik from M.oryzae. The protein is Disease resistance protein PIK6-NP of Oryza sativa subsp. japonica (Rice).